The sequence spans 203 residues: LexA repressor (203 aa).

The H-T-H motif DNA-binding region spans 28–47 (IREIGDEFGITAKGAYDHLK). Residues serine 127 and lysine 164 each act as for autocatalytic cleavage activity in the active site.

It belongs to the peptidase S24 family. In terms of assembly, homodimer.

It catalyses the reaction Hydrolysis of Ala-|-Gly bond in repressor LexA.. Its function is as follows. Represses a number of genes involved in the response to DNA damage (SOS response), including recA and lexA. In the presence of single-stranded DNA, RecA interacts with LexA causing an autocatalytic cleavage which disrupts the DNA-binding part of LexA, leading to derepression of the SOS regulon and eventually DNA repair. The polypeptide is LexA repressor (Leptospira borgpetersenii serovar Hardjo-bovis (strain JB197)).